Reading from the N-terminus, the 329-residue chain is Myoblast determination protein 1 homolog (329 aa).

Residues 160-211 enclose the bHLH domain; the sequence is DRRKAATMRERRRLRKVNEAFEVVKQRTCPNPNQRLPKVEILRSAIDYINTL. Positions 256 to 279 are disordered; it reads NPDGPNVYDDEDLSDTDEDRDHHH. Acidic residues predominate over residues 263 to 273; the sequence is YDDEDLSDTDE.

In terms of assembly, efficient DNA binding requires dimerization with another bHLH protein. As to expression, body wall muscle cells; in clonal muscle precursors, in a set of early embryonic blastomeres (the ms-granddaughters), and in six glial-like cells called GLRS.

It localises to the nucleus. Functionally, accumulation defines the body wall muscle cell fate during embryogenesis. The protein is Myoblast determination protein 1 homolog (hlh-1) of Caenorhabditis briggsae.